The following is a 413-amino-acid chain: S-adenosylmethionine synthase (413 aa).

H15 lines the ATP pocket. A Mg(2+)-binding site is contributed by D17. E43 contacts K(+). Residues E56 and Q100 each coordinate L-methionine. Residues 100-110 (QSPDISQGVNE) are flexible loop. Residues 171–173 (DGK), 248–249 (KF), D257, 263–264 (RK), A280, and K284 each bind ATP. Residue D257 coordinates L-methionine. K288 is an L-methionine binding site.

It belongs to the AdoMet synthase family. In terms of assembly, homotetramer; dimer of dimers. The cofactor is Mg(2+). K(+) is required as a cofactor.

The protein localises to the cytoplasm. It catalyses the reaction L-methionine + ATP + H2O = S-adenosyl-L-methionine + phosphate + diphosphate. It functions in the pathway amino-acid biosynthesis; S-adenosyl-L-methionine biosynthesis; S-adenosyl-L-methionine from L-methionine: step 1/1. In terms of biological role, catalyzes the formation of S-adenosylmethionine (AdoMet) from methionine and ATP. The overall synthetic reaction is composed of two sequential steps, AdoMet formation and the subsequent tripolyphosphate hydrolysis which occurs prior to release of AdoMet from the enzyme. In Prochlorococcus marinus (strain MIT 9515), this protein is S-adenosylmethionine synthase.